The primary structure comprises 315 residues: Methionyl-tRNA formyltransferase (315 aa).

S111–P114 is a binding site for (6S)-5,6,7,8-tetrahydrofolate.

It belongs to the Fmt family.

It carries out the reaction L-methionyl-tRNA(fMet) + (6R)-10-formyltetrahydrofolate = N-formyl-L-methionyl-tRNA(fMet) + (6S)-5,6,7,8-tetrahydrofolate + H(+). Functionally, attaches a formyl group to the free amino group of methionyl-tRNA(fMet). The formyl group appears to play a dual role in the initiator identity of N-formylmethionyl-tRNA by promoting its recognition by IF2 and preventing the misappropriation of this tRNA by the elongation apparatus. This is Methionyl-tRNA formyltransferase from Flavobacterium johnsoniae (strain ATCC 17061 / DSM 2064 / JCM 8514 / BCRC 14874 / CCUG 350202 / NBRC 14942 / NCIMB 11054 / UW101) (Cytophaga johnsonae).